The primary structure comprises 432 residues: Hexane cyclase pydB (432 aa).

The signal sequence occupies residues 1–20; it reads MMHQSLGLGLVVFVAAPVVA. Residues asparagine 59, asparagine 78, asparagine 153, and asparagine 308 are each glycosylated (N-linked (GlcNAc...) asparagine).

It belongs to the Diels-Alderase family.

It participates in mycotoxin biosynthesis. In terms of biological role, hexane cyclase; part of the gene cluster that mediates the biosynthesis of pyrrocidines, fungal natural products containing a macrocyclic para-cyclophane connected to a decahydrofluorene ring system that show potent antibiotic activities toward Gram-negative bacteria. Within the pathway, pydB functions synergistically with pydE, pydX and pydZ to form the cyclophane. The pathway begins with the PKS-NRPS pydA which, with the help of the trans-enoyl reductase pydC, synthesizes the polyketide-tyrosyl acyl thioester product which can be reductively off-loaded by the terminal reductase (R) domain in pydA. The alpha/beta hydrolase pydG is then required to catalyze the subsequent Knoevenagel condensation that affords the 3-pyrrolin-2-one ring, whereas the four proteins pydB, pydE, pydX and pydZ then function synergistically to form the cyclophane. PydB and the membrane-bound pydX and pydZ are lipid-binding proteins that can sequester and mold the pdyG product into the inverse S-shape. Binding of the medium chain reductase pydE to the complex would trigger the cascade oxidative cyclization. PydY is involved the Diels-Alder cycloaddition that forms the decahydrofluorene core. Additional non-enzymatic hydroxylation yields pyrrocidine A2 which can be further reduced into pyrrocidine B by an endogenous reductase. This Acremonium sp protein is Hexane cyclase pydB.